The following is a 553-amino-acid chain: Membrane protein insertase YidC (553 aa).

A helical transmembrane segment spans residues L6–F26. Positions N34–P59 are disordered. Low complexity predominate over residues Q38–P59. 5 helical membrane-spanning segments follow: residues L331–L351, N360–T380, V424–Y444, I477–Q497, and I512–V532.

This sequence belongs to the OXA1/ALB3/YidC family. Type 1 subfamily. As to quaternary structure, interacts with the Sec translocase complex via SecD. Specifically interacts with transmembrane segments of nascent integral membrane proteins during membrane integration.

It is found in the cell inner membrane. Required for the insertion and/or proper folding and/or complex formation of integral membrane proteins into the membrane. Involved in integration of membrane proteins that insert both dependently and independently of the Sec translocase complex, as well as at least some lipoproteins. Aids folding of multispanning membrane proteins. This Syntrophobacter fumaroxidans (strain DSM 10017 / MPOB) protein is Membrane protein insertase YidC.